We begin with the raw amino-acid sequence, 361 residues long: Holliday junction branch migration complex subunit RuvB (361 aa).

A large ATPase domain (RuvB-L) region spans residues 1 to 181; that stretch reads MKDQRLLDSV…FGIPIRLNFY (181 aa). Residues Leu20, Arg21, Gly62, Lys65, Thr66, Thr67, 128–130, Arg171, Tyr181, and Arg218 contribute to the ATP site; that span reads EDY. Residue Thr66 coordinates Mg(2+). Residues 182–252 form a small ATPAse domain (RuvB-S) region; the sequence is TIEELEYIVQ…VADEALSRLE (71 aa). The interval 255–361 is head domain (RuvB-H); sequence HLGLDPLDRR…QTTLWDEADE (107 aa). DNA-binding residues include Arg291, Arg310, and Arg315.

This sequence belongs to the RuvB family. As to quaternary structure, homohexamer. Forms an RuvA(8)-RuvB(12)-Holliday junction (HJ) complex. HJ DNA is sandwiched between 2 RuvA tetramers; dsDNA enters through RuvA and exits via RuvB. An RuvB hexamer assembles on each DNA strand where it exits the tetramer. Each RuvB hexamer is contacted by two RuvA subunits (via domain III) on 2 adjacent RuvB subunits; this complex drives branch migration. In the full resolvosome a probable DNA-RuvA(4)-RuvB(12)-RuvC(2) complex forms which resolves the HJ.

The protein resides in the cytoplasm. It carries out the reaction ATP + H2O = ADP + phosphate + H(+). Its function is as follows. The RuvA-RuvB-RuvC complex processes Holliday junction (HJ) DNA during genetic recombination and DNA repair, while the RuvA-RuvB complex plays an important role in the rescue of blocked DNA replication forks via replication fork reversal (RFR). RuvA specifically binds to HJ cruciform DNA, conferring on it an open structure. The RuvB hexamer acts as an ATP-dependent pump, pulling dsDNA into and through the RuvAB complex. RuvB forms 2 homohexamers on either side of HJ DNA bound by 1 or 2 RuvA tetramers; 4 subunits per hexamer contact DNA at a time. Coordinated motions by a converter formed by DNA-disengaged RuvB subunits stimulates ATP hydrolysis and nucleotide exchange. Immobilization of the converter enables RuvB to convert the ATP-contained energy into a lever motion, pulling 2 nucleotides of DNA out of the RuvA tetramer per ATP hydrolyzed, thus driving DNA branch migration. The RuvB motors rotate together with the DNA substrate, which together with the progressing nucleotide cycle form the mechanistic basis for DNA recombination by continuous HJ branch migration. Branch migration allows RuvC to scan DNA until it finds its consensus sequence, where it cleaves and resolves cruciform DNA. The protein is Holliday junction branch migration complex subunit RuvB of Bartonella quintana (strain Toulouse) (Rochalimaea quintana).